The chain runs to 461 residues: GTPase Der (461 aa).

EngA-type G domains lie at 9–171 (KTIA…DLNQ) and 200–371 (IQVG…ECFS). GTP-binding positions include 15–22 (GQPNVGKS), 62–66 (DTGGM), 123–126 (NKID), 206–213 (GRVNVGKS), 253–257 (DTAGI), and 317–320 (NKWD). Residues 372–456 (KRIPTSLLNS…PLILNAKDKK (85 aa)) enclose the KH-like domain.

The protein belongs to the TRAFAC class TrmE-Era-EngA-EngB-Septin-like GTPase superfamily. EngA (Der) GTPase family. In terms of assembly, associates with the 50S ribosomal subunit.

Its function is as follows. GTPase that plays an essential role in the late steps of ribosome biogenesis. This Helicobacter pylori (strain Shi470) protein is GTPase Der.